The following is a 147-amino-acid chain: MRTYSPKPGDIQREWLVIDATDVVLGRLAVQTANLLRGKHKAIFAPHVDTGDFVIIVNAEKVALSGDKATTKMAYRHSGYPGGLTATPIGEILEKDARKAIEKAVWGMLPKNKLGRQMLKKLKVYSGPNHPHQAQKATPFEIKQISQ.

It belongs to the universal ribosomal protein uL13 family. As to quaternary structure, part of the 50S ribosomal subunit.

Its function is as follows. This protein is one of the early assembly proteins of the 50S ribosomal subunit, although it is not seen to bind rRNA by itself. It is important during the early stages of 50S assembly. The chain is Large ribosomal subunit protein uL13 from Nocardioides sp. (strain ATCC BAA-499 / JS614).